We begin with the raw amino-acid sequence, 332 residues long: Chorismate synthase (332 aa).

Arginine 46 is an NADP(+) binding site. Residues 123–125 (HFS), glycine 253, 268–272 (KPTSS), and arginine 295 contribute to the FMN site.

Belongs to the chorismate synthase family. In terms of assembly, homotetramer. It depends on FMNH2 as a cofactor.

It catalyses the reaction 5-O-(1-carboxyvinyl)-3-phosphoshikimate = chorismate + phosphate. It functions in the pathway metabolic intermediate biosynthesis; chorismate biosynthesis; chorismate from D-erythrose 4-phosphate and phosphoenolpyruvate: step 7/7. Functionally, catalyzes the anti-1,4-elimination of the C-3 phosphate and the C-6 proR hydrogen from 5-enolpyruvylshikimate-3-phosphate (EPSP) to yield chorismate, which is the branch point compound that serves as the starting substrate for the three terminal pathways of aromatic amino acid biosynthesis. This reaction introduces a second double bond into the aromatic ring system. The polypeptide is Chorismate synthase (Chitinophaga pinensis (strain ATCC 43595 / DSM 2588 / LMG 13176 / NBRC 15968 / NCIMB 11800 / UQM 2034)).